The sequence spans 155 residues: uncharacterized protein (155 aa).

An N-terminal signal peptide occupies residues M1–A23.

This sequence to E.coli YkfB.

This is an uncharacterized protein from Escherichia coli (strain K12).